The chain runs to 345 residues: NADH-ubiquinone oxidoreductase chain 2 (345 aa).

10 consecutive transmembrane segments (helical) span residues 1–21, 25–45, 56–76, 92–114, 149–171, 178–198, 200–220, 241–261, 274–294, and 324–344; these read MNPI…VITM, NLML…PMLI, ATKY…AIVL, GLIL…FHFW, LNST…GGLN, IMAY…PYNP, LTLL…MALM, LTMI…TGFL, NCLI…FFYT, and LMFS…PQLI.

It belongs to the complex I subunit 2 family. In terms of assembly, core subunit of respiratory chain NADH dehydrogenase (Complex I) which is composed of 45 different subunits. Interacts with TMEM242.

Its subcellular location is the mitochondrion inner membrane. It catalyses the reaction a ubiquinone + NADH + 5 H(+)(in) = a ubiquinol + NAD(+) + 4 H(+)(out). Functionally, core subunit of the mitochondrial membrane respiratory chain NADH dehydrogenase (Complex I) which catalyzes electron transfer from NADH through the respiratory chain, using ubiquinone as an electron acceptor. Essential for the catalytic activity and assembly of complex I. This chain is NADH-ubiquinone oxidoreductase chain 2, found in Mus musculus (Mouse).